The following is a 442-amino-acid chain: GTPase Der (442 aa).

EngA-type G domains are found at residues proline 4–asparagine 169 and isoleucine 178–threonine 353. Residues glycine 10 to serine 17, aspartate 57 to leucine 61, asparagine 121 to glutamate 124, glycine 184 to serine 191, aspartate 231 to methionine 235, and asparagine 296 to aspartate 299 contribute to the GTP site. In terms of domain architecture, KH-like spans arginine 354–glutamate 438.

The protein belongs to the TRAFAC class TrmE-Era-EngA-EngB-Septin-like GTPase superfamily. EngA (Der) GTPase family. Associates with the 50S ribosomal subunit.

GTPase that plays an essential role in the late steps of ribosome biogenesis. This is GTPase Der from Heliobacterium modesticaldum (strain ATCC 51547 / Ice1).